The primary structure comprises 329 residues: Lipoyl synthase (329 aa).

The interval Met-1–Lys-23 is disordered. [4Fe-4S] cluster-binding residues include Cys-76, Cys-81, Cys-87, Cys-102, Cys-106, Cys-109, and Ser-316. A Radical SAM core domain is found at Cys-87–Thr-305.

This sequence belongs to the radical SAM superfamily. Lipoyl synthase family. The cofactor is [4Fe-4S] cluster.

The protein localises to the cytoplasm. It catalyses the reaction [[Fe-S] cluster scaffold protein carrying a second [4Fe-4S](2+) cluster] + N(6)-octanoyl-L-lysyl-[protein] + 2 oxidized [2Fe-2S]-[ferredoxin] + 2 S-adenosyl-L-methionine + 4 H(+) = [[Fe-S] cluster scaffold protein] + N(6)-[(R)-dihydrolipoyl]-L-lysyl-[protein] + 4 Fe(3+) + 2 hydrogen sulfide + 2 5'-deoxyadenosine + 2 L-methionine + 2 reduced [2Fe-2S]-[ferredoxin]. The protein operates within protein modification; protein lipoylation via endogenous pathway; protein N(6)-(lipoyl)lysine from octanoyl-[acyl-carrier-protein]: step 2/2. In terms of biological role, catalyzes the radical-mediated insertion of two sulfur atoms into the C-6 and C-8 positions of the octanoyl moiety bound to the lipoyl domains of lipoate-dependent enzymes, thereby converting the octanoylated domains into lipoylated derivatives. This Burkholderia pseudomallei (strain 1106a) protein is Lipoyl synthase.